A 259-amino-acid polypeptide reads, in one-letter code: Probable ABC transporter permease protein RC0129 (259 aa).

Transmembrane regions (helical) follow at residues 13 to 35, 49 to 69, 148 to 168, 195 to 215, and 237 to 257; these read TVKF…SSII, LFIG…SGAV, VITA…IGVM, PIDV…ISII, and AVVN…ELFF.

Belongs to the MlaE permease family.

It is found in the cell inner membrane. Its function is as follows. Could be part of an ABC transporter complex. The sequence is that of Probable ABC transporter permease protein RC0129 from Rickettsia conorii (strain ATCC VR-613 / Malish 7).